The following is a 91-amino-acid chain: DNA-binding protein HRL53 (91 aa).

Residues 57-91 (ATKGRNPSTGAEVDIPARNVPKFTPGKGLKDAVNG) form a disordered region.

The protein belongs to the bacterial histone-like protein family.

Functionally, histone-like DNA-binding protein which is capable of wrapping DNA to stabilize it, and thus to prevent its denaturation under extreme environmental conditions. Binds to nod promoters and induces DNA binding. The sequence is that of DNA-binding protein HRL53 from Rhizobium leguminosarum.